A 65-amino-acid polypeptide reads, in one-letter code: Light-harvesting protein B800/830/1020 alpha-2 chain (65 aa).

At 1–13 the chain is on the cytoplasmic side; that stretch reads MWKLWKFVDFRMT. The chain crosses the membrane as a helical span at residues 14–34; sequence AVGFHIFFALIAFAVHFACIS. Histidine 29 serves as a coordination point for a bacteriochlorophyll. Topologically, residues 35–65 are periplasmic; the sequence is SERFNWLEGAPAAEYYMDENPGIWKRTSYDG.

The protein belongs to the antenna complex alpha subunit family. In terms of assembly, the core complex is formed by different alpha and beta chains, binding bacteriochlorophyll molecules, and arranged most probably in tetrameric structures disposed around the reaction center. The non-pigmented gamma chains may constitute additional components.

The protein localises to the cell inner membrane. Functionally, antenna complexes are light-harvesting systems, which transfer the excitation energy to the reaction centers. The polypeptide is Light-harvesting protein B800/830/1020 alpha-2 chain (Halorhodospira halochloris (Ectothiorhodospira halochloris)).